Consider the following 1057-residue polypeptide: Probable E3 ubiquitin-protein ligase HERC4 (1057 aa).

RCC1 repeat units lie at residues 1–51, 52–101, 102–154, 156–207, 208–259, 261–311, and 313–368; these read MLCW…FVLD, DGTV…ALND, KGQV…ALSK, SEVF…VLTL, SGAI…ALTK, GGVF…AFVP, and SGRI…KRIF. An HECT domain is found at 730-1057; the sequence is KNIDYKKPLK…IDHNEGFSLI (328 aa). The active-site Glycyl thioester intermediate is C1025.

In terms of tissue distribution, expressed in brain and testis and detected in heart and placenta.

Its subcellular location is the cytoplasm. The protein resides in the cytosol. It catalyses the reaction S-ubiquitinyl-[E2 ubiquitin-conjugating enzyme]-L-cysteine + [acceptor protein]-L-lysine = [E2 ubiquitin-conjugating enzyme]-L-cysteine + N(6)-ubiquitinyl-[acceptor protein]-L-lysine.. It participates in protein modification; protein ubiquitination. Functionally, probable E3 ubiquitin-protein ligase involved in either protein trafficking or in the distribution of cellular structures. Required for spermatozoon maturation and fertility, and for the removal of the cytoplasmic droplet of the spermatozoon. E3 ubiquitin-protein ligases accept ubiquitin from an E2 ubiquitin-conjugating enzyme in the form of a thioester and then directly transfer it to targeted substrates. This is Probable E3 ubiquitin-protein ligase HERC4 (HERC4) from Homo sapiens (Human).